The chain runs to 540 residues: MLYRKPITVCLASCSVQETHGSACDVSSIAYDSRAVREGSVFFALRGTHAHGAQYIHAAIDAGACAIVHDCPLDTYVVGVYYARVPDARCALSSAAAAFYDFPTRALTVIGVTGTEGKSSTVSFIAQLLRLCGKRVGFISTVEYSLGDDILPNAEHQTTPESLTVQRLLAEMREHSCEFAVIEASSHGLSTRTARLQDVAFDVAVCMNVRHEHLEFHGSFEQYRFDKANVFRALDAHDHIKDGRRVPSFGVLWAEDASAVYFREATHKPCFFFKRGTGAEQRTAACLERMPCTLLWVQTLPQISQALRLRFVLSTVQEPAQPAQDGAHDVSVPLEGAFNACNIAASFLVLHGLLGTSLAAFAQHVQYVQPIQGRMQRVDMGQDFEVLIDYAHTPSSFEEILPPLAARVRARKRRMLVLFGSAGERDTQKRAMQGAIASRYAHVIVLTDEDPRGEDPMGILCMIAAGCEHKKLGKTLFLIPDRVAALRHIFSLARAQDLVLLLGKGHEHSIIYAHTVQPYDEERTARELLRASLSSDTLLS.

A UDP-N-acetyl-alpha-D-muramoyl-L-alanyl-D-glutamate-binding site is contributed by S33. ATP is bound at residue 114 to 120 (GTEGKSS). UDP-N-acetyl-alpha-D-muramoyl-L-alanyl-D-glutamate-binding positions include 158–159 (TT), S185, and R195. N6-carboxylysine is present on K227.

Belongs to the MurCDEF family. MurE subfamily. Post-translationally, carboxylation is probably crucial for Mg(2+) binding and, consequently, for the gamma-phosphate positioning of ATP.

The protein resides in the cytoplasm. It participates in cell wall biogenesis; peptidoglycan biosynthesis. In terms of biological role, catalyzes the addition of an amino acid to the nucleotide precursor UDP-N-acetylmuramoyl-L-alanyl-D-glutamate (UMAG) in the biosynthesis of bacterial cell-wall peptidoglycan. The protein is UDP-N-acetylmuramyl-tripeptide synthetase of Treponema pallidum (strain Nichols).